Consider the following 223-residue polypeptide: UPF0173 metal-dependent hydrolase TV0864 (223 aa).

Belongs to the UPF0173 family.

The sequence is that of UPF0173 metal-dependent hydrolase TV0864 from Thermoplasma volcanium (strain ATCC 51530 / DSM 4299 / JCM 9571 / NBRC 15438 / GSS1).